We begin with the raw amino-acid sequence, 220 residues long: UPF0319 protein YccT (220 aa).

The first 20 residues, 1-20 (MKTGIVTTLIALCLPVSVFA), serve as a signal peptide directing secretion.

Belongs to the UPF0319 family.

The polypeptide is UPF0319 protein YccT (Escherichia coli (strain 55989 / EAEC)).